Reading from the N-terminus, the 199-residue chain is Adenylyl-sulfate kinase (199 aa).

31 to 38 (GLSGSGKS) lines the ATP pocket. The Phosphoserine intermediate role is filled by S105.

It belongs to the APS kinase family.

The enzyme catalyses adenosine 5'-phosphosulfate + ATP = 3'-phosphoadenylyl sulfate + ADP + H(+). It functions in the pathway sulfur metabolism; hydrogen sulfide biosynthesis; sulfite from sulfate: step 2/3. Its function is as follows. Catalyzes the synthesis of activated sulfate. This is Adenylyl-sulfate kinase from Marinobacter nauticus (strain ATCC 700491 / DSM 11845 / VT8) (Marinobacter aquaeolei).